A 445-amino-acid chain; its full sequence is Chromosomal replication initiator protein DnaA (445 aa).

Residues 1–69 (MEKIWLEAQS…IEAISSLTNI (69 aa)) are domain I, interacts with DnaA modulators. The tract at residues 69–108 (IKYQVDFKITEKSQVEKKKVDLQATEKIENDSTRNVDFNT) is domain II. The tract at residues 109–325 (NLNPKYTFDS…GMLIRLGAYA (217 aa)) is domain III, AAA+ region. ATP contacts are provided by Gly-153, Gly-155, Lys-156, and Thr-157. The interval 326 to 445 (SLTGSEISLN…VEKMKKELMS (120 aa)) is domain IV, binds dsDNA.

It belongs to the DnaA family. In terms of assembly, oligomerizes as a right-handed, spiral filament on DNA at oriC.

Its subcellular location is the cytoplasm. In terms of biological role, plays an essential role in the initiation and regulation of chromosomal replication. ATP-DnaA binds to the origin of replication (oriC) to initiate formation of the DNA replication initiation complex once per cell cycle. Binds the DnaA box (a 9 base pair repeat at the origin) and separates the double-stranded (ds)DNA. Forms a right-handed helical filament on oriC DNA; dsDNA binds to the exterior of the filament while single-stranded (ss)DNA is stabiized in the filament's interior. The ATP-DnaA-oriC complex binds and stabilizes one strand of the AT-rich DNA unwinding element (DUE), permitting loading of DNA polymerase. After initiation quickly degrades to an ADP-DnaA complex that is not apt for DNA replication. Binds acidic phospholipids. This is Chromosomal replication initiator protein DnaA from Geotalea daltonii (strain DSM 22248 / JCM 15807 / FRC-32) (Geobacter daltonii).